Here is a 338-residue protein sequence, read N- to C-terminus: Bacteriochlorophyllide d C-20 methyltransferase (338 aa).

An S-adenosyl-L-methionine-binding site is contributed by Glu147. His150 lines the substrate pocket. Residues Gly177, Asn200, Asp227 to Ile228, and Cys242 to Arg243 contribute to the S-adenosyl-L-methionine site. The active-site Nucleophile is the Tyr246. Position 290 (His290) interacts with a bacteriochlorophyll d.

Belongs to the class I-like SAM-binding methyltransferase superfamily. Cation-independent O-methyltransferase family. In terms of assembly, homodimer.

The catalysed reaction is a bacteriochlorophyllide d + S-adenosyl-L-methionine = a bacteriochlorophyllide c + S-adenosyl-L-homocysteine + H(+). Its pathway is porphyrin-containing compound metabolism; bacteriochlorophyll biosynthesis (light-independent). In terms of biological role, involved in the biosynthesis of the major light-harvesting pigment bacteriochlorophyll c (BChlc), which confers a significant competitive advantage to green sulfur bacteria living at limiting red and near-infrared light intensities. Catalyzes the methylation at the C-20 position of the cyclic tetrapyrrole chlorin of bacteriochlorophyll d (BChld) to produce bacteriochlorophyll c (BChlc) using S-adenosylmethionine (SAM) as a methyl source. This is Bacteriochlorophyllide d C-20 methyltransferase from Chlorobaculum tepidum (strain ATCC 49652 / DSM 12025 / NBRC 103806 / TLS) (Chlorobium tepidum).